Here is a 1261-residue protein sequence, read N- to C-terminus: Structural maintenance of chromosomes protein 3 (1261 aa).

2 coiled-coil regions span residues 188 to 332 (EKIQ…HSLQ) and 406 to 450 (LIAD…YEMD). One can recognise an SMC hinge domain in the interval 534 to 645 (NGYYGTVIEL…IIVRTLDQAA (112 aa)). Coiled-coil stretches lie at residues 677-826 (KRSK…MDLM), 857-930 (NERR…DKIT), and 1023-1085 (RELE…ENRK). The DA-box signature appears at 1159-1193 (LSGGQKSLVALAIIFSIQKCDPAPFYLFDEIDAAL).

The protein belongs to the SMC family. SMC3 subfamily. Component of the cohesin complex, composed of the smc-1 and smc-3 heterodimer attached via their SMC hinge domain, scc-1 which links them, and scc-3. Interacts with scc-1, smc-1 and tim-1.

The protein resides in the nucleus. Its subcellular location is the chromosome. In terms of biological role, involved in chromosome cohesion during cell cycle and in DNA repair. Involved in the repair of double strand breaks during mitosis and meiosis. Required for chromosome segregation during mitosis. Central component of cohesin complex. The cohesin complex is required for the cohesion of sister chromatids after DNA replication. The cohesin complex apparently forms a large proteinaceous ring within which sister chromatids can be trapped. At anaphase, the complex is cleaved and dissociates from chromatin, allowing sister chromatids to segregate. Required for the localization of lab-1 to meiotic and mitotic chromosomes. This chain is Structural maintenance of chromosomes protein 3, found in Caenorhabditis elegans.